A 32-amino-acid polypeptide reads, in one-letter code: SDQGDVAEPKMHKTAPPFDFEAIPEEYLDDES.

The tract at residues 1–32 (SDQGDVAEPKMHKTAPPFDFEAIPEEYLDDES) is disordered. Residues 8 to 14 (EPKMHKT) are contains the active site. Residue Thr-14 is glycosylated (O-linked (Hex) threonine). Over residues 22-32 (AIPEEYLDDES) the composition is skewed to acidic residues.

As to quaternary structure, interacts with human F2 (thrombin); the interaction results in thrombin inhibition.

It localises to the secreted. Thrombin inhibitor. Does not inhibit other serine proteases. This chain is Variegin, found in Amblyomma variegatum (Tropical bont tick).